A 342-amino-acid polypeptide reads, in one-letter code: MLKFIQNNREITALLAVVLLFVLPGFLDRQYLSVQTLTMVYSSAQILILLAMGATLVMLTRNIDVSVGSITGMCAVLLGMLLNAGYSLPVACVTTLLLGLLAGFFNGVLVAWLKIPAIVATLGTLGLYRGIMLLWTGGKWIEGLPAELKQLSAPLLFGVSAIGWLTIILVAFMAWLLAKTAFGRSFYATGDNLQGARQLGVRTEAIRIVAFSLNGCMAALAGIVFASQIGFIPNQTGTGLEMKAIAACVLGGISLLGGSGAIIGAVLGAWFLTQIDSVLVLLRIPAWWNDFIAGLVLLAVLVFDGRLRCALERNLRRQKYARFMTPPPSVKPASSGKKREAA.

At 1–13 (MLKFIQNNREITA) the chain is on the periplasmic side. The chain crosses the membrane as a helical span at residues 14 to 34 (LLAVVLLFVLPGFLDRQYLSV). Residues 35-38 (QTLT) lie on the Cytoplasmic side of the membrane. The chain crosses the membrane as a helical span at residues 39 to 59 (MVYSSAQILILLAMGATLVML). The Periplasmic portion of the chain corresponds to 60–69 (TRNIDVSVGS). The chain crosses the membrane as a helical span at residues 70-90 (ITGMCAVLLGMLLNAGYSLPV). Topologically, residues 91 to 92 (AC) are cytoplasmic. Residues 93-113 (VTTLLLGLLAGFFNGVLVAWL) form a helical membrane-spanning segment. Residue Lys114 is a topological domain, periplasmic. The chain crosses the membrane as a helical span at residues 115 to 135 (IPAIVATLGTLGLYRGIMLLW). Residues 136 to 154 (TGGKWIEGLPAELKQLSAP) lie on the Cytoplasmic side of the membrane. The helical transmembrane segment at 155–175 (LLFGVSAIGWLTIILVAFMAW) threads the bilayer. Topologically, residues 176-212 (LLAKTAFGRSFYATGDNLQGARQLGVRTEAIRIVAFS) are periplasmic. The chain crosses the membrane as a helical span at residues 213 to 233 (LNGCMAALAGIVFASQIGFIP). Over 234 to 251 (NQTGTGLEMKAIAACVLG) the chain is Cytoplasmic. Residues 252 to 272 (GISLLGGSGAIIGAVLGAWFL) traverse the membrane as a helical segment. Topologically, residues 273 to 283 (TQIDSVLVLLR) are periplasmic. A helical transmembrane segment spans residues 284 to 304 (IPAWWNDFIAGLVLLAVLVFD). Residues 305–342 (GRLRCALERNLRRQKYARFMTPPPSVKPASSGKKREAA) lie on the Cytoplasmic side of the membrane.

Belongs to the binding-protein-dependent transport system permease family. AraH/RbsC subfamily. The complex is composed of two ATP-binding proteins (LsrA), two transmembrane proteins (LsrC and LsrD) and a solute-binding protein (LsrB).

It localises to the cell inner membrane. Functionally, part of the ABC transporter complex LsrABCD involved in autoinducer 2 (AI-2) import. Probably responsible for the translocation of the substrate across the membrane. In Escherichia coli O9:H4 (strain HS), this protein is Autoinducer 2 import system permease protein LsrC (lsrC).